A 135-amino-acid polypeptide reads, in one-letter code: Transcription antitermination protein NusB (135 aa).

Belongs to the NusB family.

Functionally, involved in transcription antitermination. Required for transcription of ribosomal RNA (rRNA) genes. Binds specifically to the boxA antiterminator sequence of the ribosomal RNA (rrn) operons. This is Transcription antitermination protein NusB from Clostridium perfringens (strain SM101 / Type A).